Here is a 354-residue protein sequence, read N- to C-terminus: Guanine nucleotide-binding protein alpha-3 subunit (354 aa).

Gly2 carries N-myristoyl glycine lipidation. A lipid anchor (S-palmitoyl cysteine) is attached at Cys4. The G-alpha domain maps to 32 to 354 (KVVKLLLLGA…QANLQGCGLY (323 aa)). The tract at residues 35–48 (KLLLLGAGECGKST) is G1 motif. Residues 40–47 (GAGECGKS), 176–182 (LLSRIKT), 201–205 (DVGGQ), 270–273 (NKKD), and Ala326 each bind GTP. Mg(2+) contacts are provided by Ser47 and Thr182. A G2 motif region spans residues 174-182 (DILLSRIKT). A G3 motif region spans residues 197–206 (FRVFDVGGQR). A G4 motif region spans residues 266–273 (ILFLNKKD). The G5 motif stretch occupies residues 324-329 (TCATDT).

This sequence belongs to the G-alpha family. G(q) subfamily. In terms of assembly, g proteins are composed of 3 units; alpha, beta and gamma. The alpha chain contains the guanine nucleotide binding site.

Its function is as follows. Guanine nucleotide-binding proteins (G proteins) are involved as modulators or transducers in various transmembrane signaling systems. Promotes transcription of 3',5'-cyclic phosphodiesterases pde-1 and pde-5, leading to reduced cGMP levels in sensory neurons. This causes suppression of insulin production and signaling which leads to increased daf-16 activity and contributes to increased adult lifespan and resistance to oxidative stress. In addition, by reducing cGMP levels, inhibits TGF-beta signaling pathways. Involved in behavioral response to P.aeruginosa by controlling the expression of daf-7, a member of the TGF-beta family, in ASJ sensory neurons. This is Guanine nucleotide-binding protein alpha-3 subunit (gpa-3) from Caenorhabditis briggsae.